Here is an 874-residue protein sequence, read N- to C-terminus: Alanine--tRNA ligase (874 aa).

Zn(2+)-binding residues include His564, His568, Cys665, and His669.

The protein belongs to the class-II aminoacyl-tRNA synthetase family. Zn(2+) serves as cofactor.

It localises to the cytoplasm. It catalyses the reaction tRNA(Ala) + L-alanine + ATP = L-alanyl-tRNA(Ala) + AMP + diphosphate. Catalyzes the attachment of alanine to tRNA(Ala) in a two-step reaction: alanine is first activated by ATP to form Ala-AMP and then transferred to the acceptor end of tRNA(Ala). Also edits incorrectly charged Ser-tRNA(Ala) and Gly-tRNA(Ala) via its editing domain. The protein is Alanine--tRNA ligase of Burkholderia vietnamiensis (strain G4 / LMG 22486) (Burkholderia cepacia (strain R1808)).